We begin with the raw amino-acid sequence, 101 residues long: Small ribosomal subunit protein uS10 (101 aa).

This sequence belongs to the universal ribosomal protein uS10 family. As to quaternary structure, part of the 30S ribosomal subunit.

In terms of biological role, involved in the binding of tRNA to the ribosomes. This is Small ribosomal subunit protein uS10 from Rhodococcus erythropolis (strain PR4 / NBRC 100887).